Reading from the N-terminus, the 611-residue chain is tRNA uridine 5-carboxymethylaminomethyl modification enzyme MnmG (611 aa).

Position 14–19 (14–19 (GAGHAG)) interacts with FAD. 274–288 (GPRYCPSIEDKIVKF) provides a ligand contact to NAD(+).

Belongs to the MnmG family. As to quaternary structure, homodimer. Heterotetramer of two MnmE and two MnmG subunits. Requires FAD as cofactor.

It localises to the cytoplasm. Its function is as follows. NAD-binding protein involved in the addition of a carboxymethylaminomethyl (cmnm) group at the wobble position (U34) of certain tRNAs, forming tRNA-cmnm(5)s(2)U34. The polypeptide is tRNA uridine 5-carboxymethylaminomethyl modification enzyme MnmG (Chlamydia caviae (strain ATCC VR-813 / DSM 19441 / 03DC25 / GPIC) (Chlamydophila caviae)).